The following is a 177-amino-acid chain: Peptidyl-tRNA hydrolase 1 (177 aa).

A tRNA-binding site is contributed by Tyr18. His23 functions as the Proton acceptor in the catalytic mechanism. 3 residues coordinate tRNA: Phe65, Asn67, and Asn113.

It belongs to the PTH family. In terms of assembly, monomer.

The protein localises to the cytoplasm. The enzyme catalyses an N-acyl-L-alpha-aminoacyl-tRNA + H2O = an N-acyl-L-amino acid + a tRNA + H(+). Functionally, hydrolyzes ribosome-free peptidyl-tRNAs (with 1 or more amino acids incorporated), which drop off the ribosome during protein synthesis, or as a result of ribosome stalling. In terms of biological role, catalyzes the release of premature peptidyl moieties from peptidyl-tRNA molecules trapped in stalled 50S ribosomal subunits, and thus maintains levels of free tRNAs and 50S ribosomes. The chain is Peptidyl-tRNA hydrolase 1 from Corynebacterium glutamicum (strain ATCC 13032 / DSM 20300 / JCM 1318 / BCRC 11384 / CCUG 27702 / LMG 3730 / NBRC 12168 / NCIMB 10025 / NRRL B-2784 / 534).